Consider the following 208-residue polypeptide: Uracil phosphoribosyltransferase (208 aa).

5-phospho-alpha-D-ribose 1-diphosphate contacts are provided by residues Arg-78, Arg-103, and 130–138 (DPMLATGGS). Uracil-binding positions include Ile-193 and 198–200 (GDA). Position 199 (Asp-199) interacts with 5-phospho-alpha-D-ribose 1-diphosphate.

The protein belongs to the UPRTase family. The cofactor is Mg(2+).

The enzyme catalyses UMP + diphosphate = 5-phospho-alpha-D-ribose 1-diphosphate + uracil. The protein operates within pyrimidine metabolism; UMP biosynthesis via salvage pathway; UMP from uracil: step 1/1. Its activity is regulated as follows. Allosterically activated by GTP. Its function is as follows. Catalyzes the conversion of uracil and 5-phospho-alpha-D-ribose 1-diphosphate (PRPP) to UMP and diphosphate. This Proteus mirabilis (strain HI4320) protein is Uracil phosphoribosyltransferase.